A 334-amino-acid polypeptide reads, in one-letter code: Isocitrate/homoisocitrate dehydrogenase (334 aa).

70–72 is an NADH binding site; that stretch reads ATS. S72, R85, R88, R98, R118, Y125, K171, and N173 together coordinate (2R,3S)-homoisocitrate. N173 serves as a coordination point for NADH. Residues D204, D228, and D232 each coordinate Mg(2+). NADH-binding positions include 261–265 and N273; that span reads GSAPD.

Belongs to the isocitrate and isopropylmalate dehydrogenases family. In terms of assembly, homotetramer. Dimer of dimers. The homotetramer can transiently dissociate into homodimers. It depends on Mg(2+) as a cofactor.

The catalysed reaction is (2R,3S)-homoisocitrate + NAD(+) = 2-oxoadipate + CO2 + NADH. The enzyme catalyses D-threo-isocitrate + NAD(+) = 2-oxoglutarate + CO2 + NADH. Its pathway is amino-acid biosynthesis; L-lysine biosynthesis via AAA pathway; L-alpha-aminoadipate from 2-oxoglutarate: step 4/5. Catalyzes the NAD(+)-dependent oxidative decarboxylation of homoisocitrate to 2-oxoadipate (alpha-ketoadipate), a reaction involved in lysine biosynthesis through the alpha-aminoadipate pathway. In addition, has high activity with isocitrate, but is inactive with 3-isopropylmalate. This Thermus thermophilus (strain ATCC BAA-163 / DSM 7039 / HB27) protein is Isocitrate/homoisocitrate dehydrogenase (hicd).